A 697-amino-acid polypeptide reads, in one-letter code: Elongation factor G (697 aa).

The 275-residue stretch at 8–282 (ENTRNIGIMA…AIVDYMPSPV (275 aa)) folds into the tr-type G domain. GTP is bound by residues 17–24 (AHIDAGKT), 81–85 (DTPGH), and 135–138 (NKMD).

It belongs to the TRAFAC class translation factor GTPase superfamily. Classic translation factor GTPase family. EF-G/EF-2 subfamily.

It is found in the cytoplasm. In terms of biological role, catalyzes the GTP-dependent ribosomal translocation step during translation elongation. During this step, the ribosome changes from the pre-translocational (PRE) to the post-translocational (POST) state as the newly formed A-site-bound peptidyl-tRNA and P-site-bound deacylated tRNA move to the P and E sites, respectively. Catalyzes the coordinated movement of the two tRNA molecules, the mRNA and conformational changes in the ribosome. This Acetivibrio thermocellus (strain ATCC 27405 / DSM 1237 / JCM 9322 / NBRC 103400 / NCIMB 10682 / NRRL B-4536 / VPI 7372) (Clostridium thermocellum) protein is Elongation factor G.